Here is a 264-residue protein sequence, read N- to C-terminus: E3 ubiquitin-protein ligase MARCHF8 (264 aa).

Positions 15–47 (LGHSVSRSSNISKAGSPTSVSAPSSFPRTSVTP) are disordered. The segment covering 17–47 (HSVSRSSNISKAGSPTSVSAPSSFPRTSVTP) has biased composition (polar residues). An RING-CH-type zinc finger spans residues 45–106 (VTPSSQDICR…ELCKFEFIME (62 aa)). Zn(2+) is bound by residues Cys53, Cys56, Cys70, Cys72, His80, Cys83, Cys96, and Cys99. A run of 2 helical transmembrane segments spans residues 130-150 (CSVT…YVLI) and 170-190 (FWTK…FMYV).

It localises to the cytoplasmic vesicle membrane. It is found in the lysosome membrane. Its subcellular location is the early endosome membrane. The catalysed reaction is S-ubiquitinyl-[E2 ubiquitin-conjugating enzyme]-L-cysteine + [acceptor protein]-L-lysine = [E2 ubiquitin-conjugating enzyme]-L-cysteine + N(6)-ubiquitinyl-[acceptor protein]-L-lysine.. It functions in the pathway protein modification; protein ubiquitination. Functionally, E3 ubiquitin-protein ligase that mediates ubiquitination of cd86 and MHC class II proteins, such as hla-dr alpha and beta, and promotes their subsequent endocytosis and sorting to lysosomes via multivesicular bodies. The chain is E3 ubiquitin-protein ligase MARCHF8 (marchf8) from Xenopus tropicalis (Western clawed frog).